Here is a 316-residue protein sequence, read N- to C-terminus: ATP synthase gamma chain (316 aa).

This sequence belongs to the ATPase gamma chain family. In terms of assembly, F-type ATPases have 2 components, CF(1) - the catalytic core - and CF(0) - the membrane proton channel. CF(1) has five subunits: alpha(3), beta(3), gamma(1), delta(1), epsilon(1). CF(0) has three main subunits: a, b and c.

Its subcellular location is the cellular thylakoid membrane. Functionally, produces ATP from ADP in the presence of a proton gradient across the membrane. The gamma chain is believed to be important in regulating ATPase activity and the flow of protons through the CF(0) complex. This is ATP synthase gamma chain from Prochlorococcus marinus (strain MIT 9301).